The chain runs to 504 residues: L-arabinose isomerase (504 aa).

Mn(2+) contacts are provided by Glu308, Glu335, His352, and His452.

It belongs to the arabinose isomerase family. It depends on Mn(2+) as a cofactor.

It carries out the reaction beta-L-arabinopyranose = L-ribulose. Its pathway is carbohydrate degradation; L-arabinose degradation via L-ribulose; D-xylulose 5-phosphate from L-arabinose (bacterial route): step 1/3. In terms of biological role, catalyzes the conversion of L-arabinose to L-ribulose. In Bifidobacterium adolescentis (strain ATCC 15703 / DSM 20083 / NCTC 11814 / E194a), this protein is L-arabinose isomerase.